A 374-amino-acid chain; its full sequence is Potassium channel subfamily K member 9 (374 aa).

Residues 1–8 (MKRQNVRT) are Cytoplasmic-facing. A helical transmembrane segment spans residues 9-29 (LSLIVCTFTYLLVGAAVFDAL). Residues 30 to 88 (ESDHEMREEEKLKAEEIRIKGKYNISSEDYRQLELVILQSEPHRAGVQWKFAGSFYFAI) lie on the Extracellular side of the membrane. N53 carries an N-linked (GlcNAc...) asparagine glycan. Positions 89–101 (TVITTIGYGHAAP) form an intramembrane region, pore-forming. The K(+) site is built by T93, I94, G95, and Y96. Positions 93–98 (TIGYGH) are selectivity filter 1. Residues 102–107 (GTDAGK) are Extracellular-facing. Residues 108–128 (AFCMFYAVLGIPLTLVMFQSL) traverse the membrane as a helical segment. The Cytoplasmic portion of the chain corresponds to 129 to 158 (GERMNTFVRYLLKRIKKCCGMRNTDVSMEN). Residues 159–179 (MVTVGFFSCMGTLCIGAAAFS) form a helical membrane-spanning segment. The Extracellular segment spans residues 180–194 (QCEEWSFFHAYYYCF). The segment at residues 195–207 (ITLTTIGFGDYVA) is an intramembrane region (pore-forming). Residues T199, I200, G201, and F202 each coordinate K(+). The segment at 199 to 204 (TIGFGD) is selectivity filter 2. The Extracellular segment spans residues 208–218 (LQTKGALQKKP). A helical transmembrane segment spans residues 219 to 239 (LYVAFSFMYILVGLTVIGAFL). Over 240-374 (NLVVLRFLTM…QRLMKRRKSV (135 aa)) the chain is Cytoplasmic. Residues 243–248 (VLRFLT) form an X-gate region.

It belongs to the two pore domain potassium channel (TC 1.A.1.8) family. As to quaternary structure, homodimer. Heterodimer with KCNK1. Heterodimer with KCNK3. As to expression, mainly found in the cerebellum. Also found in adrenal gland, kidney and lung.

Its subcellular location is the cell membrane. It localises to the mitochondrion inner membrane. The protein resides in the cell projection. The protein localises to the dendrite. The catalysed reaction is K(+)(in) = K(+)(out). It catalyses the reaction Na(+)(in) = Na(+)(out). With respect to regulation, inhibited by extracellular acidification adopting a nonconductive conformation at pH 6.0. Inhibited by phorbol 12-myristate 13-acetate (PMA). Its function is as follows. K(+) channel that conducts voltage-dependent outward rectifying currents upon membrane depolarization. Voltage sensing is coupled to K(+) electrochemical gradient in an 'ion flux gating' mode where outward but not inward ion flow opens the gate. Changes ion selectivity and becomes permeable to Na(+) ions in response to extracellular acidification. Protonation of the pH sensor His-98 stabilizes C-type inactivation conformation likely converting the channel from outward K(+)-conducting, to inward Na(+)-conducting to nonconductive state. Homo- and heterodimerizes to form functional channels with distinct regulatory and gating properties. Allows K(+) currents with fast-gating kinetics important for the repolarization and hyperpolarization phases of action potentials. In granule neurons, hyperpolarizes the resting membrane potential to limit intrinsic neuronal excitability, but once the action potential threshold is reached, supports high-frequency action potential firing and increased neuronal excitability. Homomeric and/or heteromeric KCNK3:KCNK9 channels operate in cerebellar granule cells, whereas heteromeric KCNK1:KCNK9 enables currents in hippocampal dentate gyrus granule neurons. Dispensable for central chemosensory respiration i.e. breathing controlled by brainstem CO2/pH, it rather conducts pH-sensitive currents and controls the firing rate of serotonergic raphe neurons involved in potentiation of the respiratory chemoreflex. In retinal ganglion cells, mediates outward currents that regulate action potentials in response to acidification of the synaptic cleft. Involved in transmission of image-forming and nonimage-forming visual information in the retina. In adrenal gland, contributes to the maintenance of a hyperpolarized resting membrane potential of aldosterone-producing cells at zona glomerulosa and limits aldosterone release as part of a regulatory mechanism that controls arterial blood pressure and electrolyte homeostasis. This is Potassium channel subfamily K member 9 from Homo sapiens (Human).